A 546-amino-acid chain; its full sequence is Probable malate:quinone oxidoreductase (546 aa).

This sequence belongs to the MQO family. The cofactor is FAD.

It catalyses the reaction (S)-malate + a quinone = a quinol + oxaloacetate. Its pathway is carbohydrate metabolism; tricarboxylic acid cycle; oxaloacetate from (S)-malate (quinone route): step 1/1. In Acinetobacter baumannii (strain ACICU), this protein is Probable malate:quinone oxidoreductase.